The sequence spans 3898 residues: Genome polyprotein (3898 aa).

The 168-residue stretch at 1-168 (MELNHFELLY…TNCPLWVTSC (168 aa)) folds into the Peptidase C53 domain. Residues Glu-22, His-49, and Cys-69 each act as for N-terminal protease activity in the active site. The tract at residues 32-54 (LFGNPSEVHPQSTLKLPHDRGRG) is disordered. The segment at 112–138 (CEVTKRIGRVTGSDGKLYHIYVCVDGC) is zinc-binding TRASH domain. Asn-157 is a glycosylation site (N-linked (GlcNAc...) asparagine; by host). Disordered regions lie at residues 170–206 (DDGA…KPPD) and 221–242 (KGKV…KPPE). 2 stretches are compositionally biased toward basic and acidic residues: residues 176–185 (SKDKKPDRMN) and 192–204 (APRE…KTKP). N-linked (GlcNAc...) asparagine; by host glycosylation is found at Asn-269, Asn-274, Asn-278, Asn-293, and Asn-332. Cystine bridges form between Cys-305/Cys-349 and Cys-335/Cys-336. Asn-362 and Asn-367 each carry an N-linked (GlcNAc...) asparagine; by host glycan. Cystine bridges form between Cys-377-Cys-422 and Cys-381-Cys-405. N-linked (GlcNAc...) asparagine; by host glycosylation is found at Asn-410, Asn-425, Asn-500, and Asn-594. The cysteines at positions 693 and 737 are disulfide-linked. N-linked (GlcNAc...) asparagine; by host glycans are attached at residues Asn-805, Asn-810, Asn-874, Asn-918, Asn-949, and Asn-986. The next 9 membrane-spanning stretches (helical) occupy residues 1031–1051 (FVVL…LIVT), 1070–1090 (VVLI…YFLL), 1104–1124 (ILLL…VALL), 1140–1164 (QRQP…MLLA), 1189–1209 (FSTD…TYIS), 1217–1237 (WLQY…LKGI), 1247–1267 (LPSH…AVVT), 1281–1301 (VPTL…ILIL), and 1360–1380 (TMLP…WQLI). In terms of domain architecture, Peptidase C74 spans 1441 to 1589 (KELIIKHKVR…DLEHLGWVLR (149 aa)). Active-site for cysteine protease NS2 activity residues include His-1447, Glu-1461, and Cys-1512. Residues 1568 to 1588 (MLLVGNLGTEIGDLEHLGWVL) traverse the membrane as a helical segment. Positions 1590–1763 (GPAVCKKVTE…LPIFEASSGR (174 aa)) constitute a Peptidase S31 domain. Residues His-1658 and Asp-1695 each act as charge relay system; for serine protease NS3 activity in the active site. Asn-1713 carries an N-linked (GlcNAc...) asparagine; by host glycan. The active-site Charge relay system; for serine protease NS3 activity is the Ser-1752. One can recognise a Helicase ATP-binding domain in the interval 1802 to 1960 (ITTMNRGEFR…QKHPIEEFIA (159 aa)). Residue 1815-1822 (LATGAGKT) coordinates ATP. Residues 1910–1913 (DEYH) carry the DEAH box motif. The 202-residue stretch at 1978 to 2179 (GLKIPVEEMK…ELPMAVKNIM (202 aa)) folds into the Helicase C-terminal domain. 8 N-linked (GlcNAc...) asparagine; by host glycosylation sites follow: Asn-2134, Asn-2217, Asn-2494, Asn-2787, Asn-2815, Asn-2891, Asn-3211, and Asn-3316. Thr-3500 and Leu-3502 together coordinate GTP. In terms of domain architecture, RdRp catalytic spans 3519–3642 (PVAVSFDTKA…ITERALGEKF (124 aa)). A glycan (N-linked (GlcNAc...) asparagine; by host) is linked at Asn-3689. Arg-3697 is a binding site for GTP. N-linked (GlcNAc...) asparagine; by host glycosylation is present at Asn-3698. Lys-3705 contacts GTP. Asn-3794 carries N-linked (GlcNAc...) asparagine; by host glycosylation.

This sequence belongs to the pestivirus polyprotein family. As to quaternary structure, interacts (via N-terminus) with host SP1; this interaction induces proteasomal degradation of SP1 with subsequent down-regulation of HDAC1 and ISG15 expression thereby counteracting the host innate immunity. Interacts (via C-terminus) with host IRF3. In terms of assembly, interacts with host OS9. Homodimer; disulfide-linked. Interacts with host RPSA. As to quaternary structure, homodimer; disulfide-linked. Heterodimer with E1; disulfide-linked. In terms of assembly, homodimer; disulfide-linked. Heterodimer with E1; disulfide-linked. Interacts with host TRX2. Interacts with host receptor ADAM17 (via metalloproteinase domain); this interaction allows binding and probably entry of the virus into the host cell. Interacts with host ANXA2; this interaction allows binding and probably entry of the virus into the host cell. Interacts with host MERTK; this interaction allows binding and probably entry of the virus into the host cell. Interacts with host TRAF6; this interaction inhibits host NF-kappa-B pathway. Interacts with NS5B; this interaction enhances RNA-dependent RNA polymerase activity. Interacts with protein NS4A. As to quaternary structure, interacts with host RAB5, this interaction facilitates the formation of NS4B-related complex. Interacts with host FTH1; this interaction plays a positive role in viral anti-apoptosis. In terms of assembly, interacts with RNA-directed RNA polymerase. Interacts with host RSAD2; this interaction inhibits viral replication. Interacts with NS5A; this interaction promotes viral replication. In terms of processing, heavily glycosylated. Post-translationally, the viral RNA of pestiviruses is expressed as a single polyprotein which undergoes post-translational proteolytic processing resulting in the production of at least eleven individual proteins. The N-terminal protease cleaves itself from the nascent polyprotein autocatalytically and thereby generates the N-terminus of the adjacent viral capsid protein C. Cleavage between E2 and p7 is partial.

It is found in the host cytoplasm. Its subcellular location is the virion. The protein resides in the host cell membrane. It localises to the virion membrane. The protein localises to the host cell surface. It is found in the host membrane. The enzyme catalyses Leu is conserved at position P1 for all four cleavage sites. Alanine is found at position P1' of the NS4A-NS4B cleavage site, whereas serine is found at position P1' of the NS3-NS4A, NS4B-NS5A and NS5A-NS5B cleavage sites.. The catalysed reaction is RNA(n) + a ribonucleoside 5'-triphosphate = RNA(n+1) + diphosphate. It carries out the reaction a ribonucleoside 5'-triphosphate + H2O = a ribonucleoside 5'-diphosphate + phosphate + H(+). It catalyses the reaction ATP + H2O = ADP + phosphate + H(+). Functionally, leader cysteine autoprotease that cleaves itself from the nascent polyprotein during translation of the viral mRNA. Once released, plays a role in the inhibition of host innate immune response by interacting with host IRF3 and inducing its proteasomal degradation. Its function is as follows. Packages viral RNA to form a viral nucleocapsid and thereby protects viral RNA. Also plays a role in transcription regulation. Protects the incoming virus against IFN-induced effectors. Plays a role in viral entry. Interacts with host RPSA that acts as a cellular attachment receptor for the virus. Also possesses intrinsic ribonuclease (RNase) activity that can inhibit the production of type I interferon and assist in the development of persistent infections. Cleaves preferentially NpU bonds. Binds to heparan sulfate on the host cells for entry. In terms of biological role, plays a role in cell attachment and subsequent fusion of viral and cellular membranes. Therefore, mediates together with envelope glycoprotein E2 the viral entry. Functionally, plays a role in cell attachment and subsequent fusion of viral and cellular membranes. Therefore, mediates together with envelope glycoprotein E1 the viral entry. Binds to host ADAM17 receptor for entry. Binds to host ANXA2 for entry. Binds to host MERTK for entry. Its function is as follows. Plays an essential role in the virus replication cycle by acting as a viroporin. Forms ion conductive pores, which alters the cell permeability allowing the transport of ions and other small molecules. Autoprotease that associates with the host chaperone JIV and cleaves the NS2-3 protein between NS2 and NS3. Also plays a role in the formation of infectious particles. In terms of biological role, plays a role in the regulation of viral RNA replication. Functionally, multifunctional protein that contains an N-terminal protease and a C-terminal helicase, playing essential roles in viral polyprotein processing and viral genome replication. The chymotrypsin-like serine protease activity utilizes NS4A as an essential cofactor and catalyzes the cleavage of the polyprotein leading to the release of NS4A, NS4B, NS5A, and NS5B. Plays a role in the inhibition of host NF-kappa-B activation by interacting with and inhibiting host TRAF6. Interacts with NS5B to enhance RNA-dependent RNA polymerase activity. Its function is as follows. Acts as a cofactor for the NS3 protease activity. Induces a specific membrane alteration that serves as a scaffold for the virus replication complex. Antagonizes host cell apoptosis by interacting with host ferritin heavy chain. The ORF4 protein physically binds host FTH1/FHC, resulting in the reduction of FTH1 protein levels in host cells. Reduction of FTH1 concentration further inhibits the accumulation of reactive oxygen in host cells, leading to reduced apoptosis. In terms of biological role, regulates viral RNA replication by interacting with the 3'-untranslated region of viral RNA in a dose-dependent manner. At small concentrations promotes viral synthesis by interacting with the polymerase NS5B while at large concentrations, inhibits replication. Functionally, replicates the viral (+) and (-) genome. In Classical swine fever virus (strain Alfort/Tuebingen) (CSFV), this protein is Genome polyprotein.